The chain runs to 276 residues: Large ribosomal subunit protein uL2c (276 aa).

Positions 225-276 are disordered; it reads AMNPVDHPHGGGEGRTPIGRKKPVTPWGYSALGKKSRKRNRYSDASILRRRE.

The protein belongs to the universal ribosomal protein uL2 family. Part of the 50S ribosomal subunit.

The protein localises to the plastid. The protein resides in the chloroplast. The protein is Large ribosomal subunit protein uL2c (rpl2) of Pinus koraiensis (Korean pine).